The chain runs to 359 residues: 3-dehydroquinate synthase (359 aa).

NAD(+) contacts are provided by residues 70–75 (DGEQYK), 105–109 (GVIGD), 129–130 (TT), Lys142, Lys151, and 169–172 (FYKT). Positions 184, 247, and 264 each coordinate Zn(2+).

The protein belongs to the sugar phosphate cyclases superfamily. Dehydroquinate synthase family. Co(2+) is required as a cofactor. Zn(2+) serves as cofactor. Requires NAD(+) as cofactor.

Its subcellular location is the cytoplasm. The enzyme catalyses 7-phospho-2-dehydro-3-deoxy-D-arabino-heptonate = 3-dehydroquinate + phosphate. Its pathway is metabolic intermediate biosynthesis; chorismate biosynthesis; chorismate from D-erythrose 4-phosphate and phosphoenolpyruvate: step 2/7. Functionally, catalyzes the conversion of 3-deoxy-D-arabino-heptulosonate 7-phosphate (DAHP) to dehydroquinate (DHQ). The protein is 3-dehydroquinate synthase of Francisella tularensis subsp. holarctica (strain OSU18).